The following is a 365-amino-acid chain: Aminomethyltransferase (365 aa).

This sequence belongs to the GcvT family. The glycine cleavage system is composed of four proteins: P, T, L and H.

The enzyme catalyses N(6)-[(R)-S(8)-aminomethyldihydrolipoyl]-L-lysyl-[protein] + (6S)-5,6,7,8-tetrahydrofolate = N(6)-[(R)-dihydrolipoyl]-L-lysyl-[protein] + (6R)-5,10-methylene-5,6,7,8-tetrahydrofolate + NH4(+). In terms of biological role, the glycine cleavage system catalyzes the degradation of glycine. This Yersinia pseudotuberculosis serotype O:1b (strain IP 31758) protein is Aminomethyltransferase.